Reading from the N-terminus, the 217-residue chain is MAHSIWHEKIKSFLPEHYYGRINHFLDEAYASGLVYPQRENVFKALQVTPLEETKVLILGQDPYHGPKQAQGLSFSVPEEISAPPSLINILKELADDIGPRDHHDLSTWASQGVLLLNACLTVPAGQANGHAGLIWEPFTDAVIKVLNEKDSPVVFILWGAYARKKKAFITNPKHHIIESPHPSPLSSYRGFFGSKPFSRTNAILEKEGMTGVDWLK.

Residue aspartate 62 is the Proton acceptor of the active site.

Belongs to the uracil-DNA glycosylase (UDG) superfamily. UNG family.

The protein localises to the cytoplasm. The catalysed reaction is Hydrolyzes single-stranded DNA or mismatched double-stranded DNA and polynucleotides, releasing free uracil.. Functionally, excises uracil residues from the DNA which can arise as a result of misincorporation of dUMP residues by DNA polymerase or due to deamination of cytosine. The chain is Uracil-DNA glycosylase from Streptococcus pyogenes serotype M3 (strain ATCC BAA-595 / MGAS315).